Here is a 265-residue protein sequence, read N- to C-terminus: uncharacterized protein (265 aa).

Residues 3-23 form a helical; Signal-anchor for type II membrane protein membrane-spanning segment; that stretch reads KKTWVYIIIAIIIILLLVWYF. Asn37 and Asn125 each carry an N-linked (GlcNAc...) asparagine; by host glycan. Positions 37 to 94 form a coiled coil; the sequence is NQTYNMLQQQISSLNQQILFLKQQISNLHVPAPTSTVNSLRQTVSDINQQVSTINNQI. A coiled-coil region spans residues 158–257; the sequence is NVADNELNVL…KNSLGSAVRN (100 aa).

The protein localises to the host membrane. It localises to the virion. This is an uncharacterized protein from Acanthamoeba polyphaga (Amoeba).